Here is a 342-residue protein sequence, read N- to C-terminus: N-acetyl-gamma-glutamyl-phosphate reductase (342 aa).

Cys-149 is an active-site residue.

It belongs to the NAGSA dehydrogenase family. Type 1 subfamily.

The protein resides in the cytoplasm. The enzyme catalyses N-acetyl-L-glutamate 5-semialdehyde + phosphate + NADP(+) = N-acetyl-L-glutamyl 5-phosphate + NADPH + H(+). Its pathway is amino-acid biosynthesis; L-arginine biosynthesis; N(2)-acetyl-L-ornithine from L-glutamate: step 3/4. Functionally, catalyzes the NADPH-dependent reduction of N-acetyl-5-glutamyl phosphate to yield N-acetyl-L-glutamate 5-semialdehyde. The polypeptide is N-acetyl-gamma-glutamyl-phosphate reductase (Laribacter hongkongensis (strain HLHK9)).